Consider the following 1234-residue polypeptide: 1-phosphatidylinositol 4,5-bisphosphate phosphodiesterase beta-3 (1234 aa).

Ala2 carries the post-translational modification N-acetylalanine. The 151-residue stretch at 318 to 468 (DMTQPLSAYF…LMGRILVKNK (151 aa)) folds into the PI-PLC X-box domain. Residues His332 and His379 contribute to the active site. Residues 467 to 587 (NKKRHRPSAG…GTASSEVNAT (121 aa)) form a disordered region. Phosphoserine occurs at positions 474, 490, 495, and 537. Low complexity predominate over residues 488–515 (EQSNSALSESSAATEPSSPQLGSPSSDS). Over residues 555–567 (REDEEEDEEEEEQ) the composition is skewed to acidic residues. A compositionally biased stretch (polar residues) spans 576–587 (DEGTASSEVNAT). A PI-PLC Y-box domain is found at 590–706 (MSTLVNYIEP…GYLLKPEFMR (117 aa)). The C2 domain occupies 707-835 (RPDKSFDPFT…RNEANQPLCL (129 aa)). The span at 887–908 (AGQETCQDTQSQQLGSQPSSNP) shows a compositional bias: polar residues. The segment at 887-937 (AGQETCQDTQSQQLGSQPSSNPTPSPLDASPRRPPGPTTSPASTSLSSPGQ) is disordered. A compositionally biased stretch (low complexity) spans 925–936 (TSPASTSLSSPG). 2 positions are modified to phosphoserine: Ser926 and Ser1105. The tract at residues 1198 to 1234 (GLGDGPLVACASNGHAPGSSGHLSGADSESQEENTQL) is disordered. Residues 1231 to 1234 (NTQL) form an interaction with SHANK2 region.

As to quaternary structure, interacts with SHANK2. Interacts with LPAR2. Requires Ca(2+) as cofactor.

It localises to the cytoplasm. The protein resides in the membrane. It is found in the nucleus. The enzyme catalyses a 1,2-diacyl-sn-glycero-3-phospho-(1D-myo-inositol-4,5-bisphosphate) + H2O = 1D-myo-inositol 1,4,5-trisphosphate + a 1,2-diacyl-sn-glycerol + H(+). It carries out the reaction a 1,2-diacyl-sn-glycero-3-phospho-(1D-myo-inositol) + H2O = 1D-myo-inositol 1-phosphate + a 1,2-diacyl-sn-glycerol + H(+). With respect to regulation, activated by G(q)/G(11) G alpha proteins in response to ligand-binding to G protein-coupled receptors. Its function is as follows. Catalyzes the production of the second messenger molecules diacylglycerol (DAG) and inositol 1,4,5-trisphosphate (IP3). Key transducer of G protein-coupled receptor signaling: activated by G(q)/G(11) G alpha proteins downstream of G protein-coupled receptors activation. In neutrophils, participates in a phospholipase C-activating N-formyl peptide-activated GPCR (G protein-coupled receptor) signaling pathway by promoting RASGRP4 activation by DAG, to promote neutrophil functional responses. The sequence is that of 1-phosphatidylinositol 4,5-bisphosphate phosphodiesterase beta-3 from Homo sapiens (Human).